A 273-amino-acid polypeptide reads, in one-letter code: IMGHMVNAIEQVDEFLNLGANAIEFDIDFDKDGIAQITHHGIPCDCGRKCTKKAIFTEYLDNIRQVTTPDDPELREQLVLLALDLKLQRISSAKAYRAGEDVAKKLLDHYWQRGNSRARAYILLNIPLVEDYEFIRAFKDTLKNEGYESYNDKVGINFTGNEDLDKIRDVLEILGIHKQVWQADGITSCFARGTERLKEALEKRDTPGYNYINKVYAWTLVRKSIMRRSLRLGVDGVMSNNPDRVIKVLKEKEFADKFRLATYNDNPWEKFRG.

H4 is a catalytic residue. Mg(2+) is bound by residues E24 and D26. The Nucleophile role is filled by H40. 2 cysteine pairs are disulfide-bonded: C44/C50 and C46/C189. D84 serves as a coordination point for Mg(2+).

Belongs to the arthropod phospholipase D family. Class II subfamily. The cofactor is Mg(2+). In terms of tissue distribution, expressed by the venom gland.

It is found in the secreted. The enzyme catalyses an N-(acyl)-sphingosylphosphocholine = an N-(acyl)-sphingosyl-1,3-cyclic phosphate + choline. It catalyses the reaction an N-(acyl)-sphingosylphosphoethanolamine = an N-(acyl)-sphingosyl-1,3-cyclic phosphate + ethanolamine. The catalysed reaction is a 1-acyl-sn-glycero-3-phosphocholine = a 1-acyl-sn-glycero-2,3-cyclic phosphate + choline. It carries out the reaction a 1-acyl-sn-glycero-3-phosphoethanolamine = a 1-acyl-sn-glycero-2,3-cyclic phosphate + ethanolamine. Its function is as follows. Dermonecrotic toxins cleave the phosphodiester linkage between the phosphate and headgroup of certain phospholipids (sphingolipid and lysolipid substrates), forming an alcohol (often choline) and a cyclic phosphate. This toxin acts on sphingomyelin (SM). It may also act on ceramide phosphoethanolamine (CPE), lysophosphatidylcholine (LPC) and lysophosphatidylethanolamine (LPE), but not on lysophosphatidylserine (LPS), and lysophosphatidylglycerol (LPG). It acts by transphosphatidylation, releasing exclusively cyclic phosphate products as second products. Induces dermonecrosis, hemolysis, increased vascular permeability, edema, inflammatory response, and platelet aggregation. The chain is Dermonecrotic toxin SdSicTox-betaIIB1bxiv from Sicarius cf. damarensis (strain GJB-2008) (Six-eyed sand spider).